We begin with the raw amino-acid sequence, 217 residues long: Adenosylcobinamide-GDP ribazoletransferase (217 aa).

A run of 5 helical transmembrane segments spans residues 6 to 26 (ALLSFFTIIPAGVAKLDFKCA), 39 to 61 (GPAAAALWLGASPHVAYLLLLLM), 95 to 115 (GTGGIFAVVATYAVATASTAS), 116 to 136 (PLQLLLAEVFSKALIVTVAAF), and 162 to 182 (ALAVIICLRPAATLAALAVAL).

This sequence belongs to the CobS family. The cofactor is Mg(2+).

The protein resides in the cell membrane. It carries out the reaction alpha-ribazole + adenosylcob(III)inamide-GDP = adenosylcob(III)alamin + GMP + H(+). The catalysed reaction is alpha-ribazole 5'-phosphate + adenosylcob(III)inamide-GDP = adenosylcob(III)alamin 5'-phosphate + GMP + H(+). It participates in cofactor biosynthesis; adenosylcobalamin biosynthesis; adenosylcobalamin from cob(II)yrinate a,c-diamide: step 7/7. Joins adenosylcobinamide-GDP and alpha-ribazole to generate adenosylcobalamin (Ado-cobalamin). Also synthesizes adenosylcobalamin 5'-phosphate from adenosylcobinamide-GDP and alpha-ribazole 5'-phosphate. In Pyrobaculum calidifontis (strain DSM 21063 / JCM 11548 / VA1), this protein is Adenosylcobinamide-GDP ribazoletransferase.